The chain runs to 170 residues: Lipoprotein signal peptidase (170 aa).

3 helical membrane-spanning segments follow: residues 12–32 (WYWVVVLVFLADQLSKQWVLA), 67–87 (WQRWLFTIVAVGFSSLLTVWL), and 93–113 (SLLKLNLAYTLVIGGALGNLV). Active-site residues include Asp123 and Asp141. The chain crosses the membrane as a helical span at residues 137-157 (FNIADSAIFIGAVLIIWDSFF).

Belongs to the peptidase A8 family.

It is found in the cell inner membrane. The enzyme catalyses Release of signal peptides from bacterial membrane prolipoproteins. Hydrolyzes -Xaa-Yaa-Zaa-|-(S,diacylglyceryl)Cys-, in which Xaa is hydrophobic (preferably Leu), and Yaa (Ala or Ser) and Zaa (Gly or Ala) have small, neutral side chains.. Its pathway is protein modification; lipoprotein biosynthesis (signal peptide cleavage). Functionally, this protein specifically catalyzes the removal of signal peptides from prolipoproteins. This Shewanella oneidensis (strain ATCC 700550 / JCM 31522 / CIP 106686 / LMG 19005 / NCIMB 14063 / MR-1) protein is Lipoprotein signal peptidase.